The chain runs to 503 residues: Angiopoietin-4 (503 aa).

The N-terminal stretch at 1 to 24 (MLSQLAMLQGSLLLVVATMSVAQQ) is a signal peptide. Residues 84-238 (TQQVKQLEQA…RQSAALTNIE (155 aa)) adopt a coiled-coil conformation. N-linked (GlcNAc...) asparagine glycans are attached at residues Asn96, Asn126, Asn140, Asn158, Asn247, Asn274, Asn311, Asn337, and Asn427. Positions 282 to 502 (MAGEQVFQDC…ASRMMIRPLD (221 aa)) constitute a Fibrinogen C-terminal domain. Cys291 and Cys320 form a disulfide bridge. Residues Cys444 and Cys457 are joined by a disulfide bond.

As to quaternary structure, homodimer; disulfide-linked. Interacts with TEK/TIE2. In terms of tissue distribution, highly expressed in the lung with much lower levels found in other tissues.

The protein localises to the secreted. Its function is as follows. Binds to TEK/TIE2, modulating ANGPT1 signaling. Can induce tyrosine phosphorylation of TEK/TIE2. Promotes endothelial cell survival, migration and angiogenesis. The protein is Angiopoietin-4 (ANGPT4) of Homo sapiens (Human).